The chain runs to 337 residues: m7GpppX diphosphatase (337 aa).

Residues 1 to 35 (MADAAPQLGKRKRELDVEEAHAASTEEKEAGVGNG) form a disordered region. Ala2 bears the N-acetylalanine mark. A nuclear localization signal (NLS) motif is present at residues 10–13 (KRKR). A compositionally biased stretch (basic and acidic residues) spans 13-30 (RELDVEEAHAASTEEKEA). Residues Ser24 and Ser101 each carry the phosphoserine modification. An N6-acetyllysine mark is found at Lys138 and Lys142. A nuclear export sequence (NES) motif is present at residues 142-154 (KYLRQDLRLIRET). Substrate-binding positions include Trp175, Glu185, Asp205, Lys207, and 268-279 (HYLPSYYHLHVH). A Histidine triad motif motif is present at residues 275 to 279 (HLHVH). The active-site Nucleophile is His277.

The protein belongs to the HIT family. As to quaternary structure, homodimer. Associates with components of the exosome multienzyme ribonuclease complex, such as EXOSC3 and EXOSC4. Interacts with NDOR1. As to expression, detected in liver, brain, kidney, testis and prostate.

The protein resides in the cytoplasm. Its subcellular location is the nucleus. It carries out the reaction a 5'-end (N(7)-methyl 5'-triphosphoguanosine)-ribonucleoside in mRNA + H2O = N(7)-methyl-GMP + a 5'-end diphospho-ribonucleoside in mRNA + 2 H(+). Its activity is regulated as follows. The hydrolytic product 7-methylguanosine diphosphate (m7GDP) efficiently inhibits the decapping scavenger activity and acts as a competitive inhibitor in vitro. Inhibited by 2,4-diaminoquinazoline. In terms of biological role, decapping scavenger enzyme that catalyzes the cleavage of a residual cap structure following the degradation of mRNAs by the 3'-&gt;5' exosome-mediated mRNA decay pathway. Hydrolyzes cap analog structures like 7-methylguanosine nucleoside triphosphate (m7GpppG) with up to 10 nucleotide substrates (small capped oligoribonucleotides) and specifically releases 5'-phosphorylated RNA fragments and 7-methylguanosine monophosphate (m7GMP). Cleaves cap analog structures like tri-methyl guanosine nucleoside triphosphate (m3(2,2,7)GpppG) with very poor efficiency. Does not hydrolyze unmethylated cap analog (GpppG) and shows no decapping activity on intact m7GpppG-capped mRNA molecules longer than 25 nucleotides. Does not hydrolyze 7-methylguanosine diphosphate (m7GDP) to m7GMP. May also play a role in the 5'-&gt;3 mRNA decay pathway; m7GDP, the downstream product released by the 5'-&gt;3' mRNA mediated decapping activity, may be also converted by DCPS to m7GMP. Binds to m7GpppG and strongly to m7GDP. Plays a role in first intron splicing of pre-mRNAs. Inhibits activation-induced cell death. This is m7GpppX diphosphatase (DCPS) from Homo sapiens (Human).